Reading from the N-terminus, the 116-residue chain is Iron-sulfur cluster insertion protein ErpA (116 aa).

Iron-sulfur cluster is bound by residues Cys-44, Cys-108, and Cys-110.

It belongs to the HesB/IscA family. Homodimer. Iron-sulfur cluster serves as cofactor.

Its function is as follows. Required for insertion of 4Fe-4S clusters for at least IspG. The protein is Iron-sulfur cluster insertion protein ErpA of Shewanella amazonensis (strain ATCC BAA-1098 / SB2B).